The chain runs to 119 residues: Protein SPIRAL1 (119 aa).

Residues 1–11 show a composition bias toward gly residues; it reads MGRGNSCGGGQ. Disordered stretches follow at residues 1-47 and 85-105; these read MGRG…PPVT and EGQN…HAAP. The span at 24–34 shows a compositional bias: pro residues; that stretch reads APKPVPAPRPA.

It belongs to the SPIRAL1 family. Ubiquitinated. Upon salt-stress induction, it is subject to proteasome-dependent degradation. In terms of tissue distribution, ubiquitous. High expression was associated with tissues undergoing rapid cell expansion, including the root elongation zone, hypocotyls of dark grown-seedlings, and cotyledons of light-grown seedlings.

Its subcellular location is the cytoplasm. It is found in the cytoskeleton. The protein localises to the phragmoplast. The protein resides in the spindle. Functionally, required for directional control of cell elongation. Stabilizes growing ends of cortical microtubules and influences their dynamic properties. Acts redundantly with SP1Ls in maintaining the cortical microtubules organization essential for anisotropic cell growth. Plays a key role in salt stress-induced microtubules disassembly. The polypeptide is Protein SPIRAL1 (SPR1) (Arabidopsis thaliana (Mouse-ear cress)).